Reading from the N-terminus, the 917-residue chain is Hexokinase HKDC1 (917 aa).

The mitochondrial-binding peptide (MBP) stretch occupies residues 1-20 (MFAVHLMAFYFSKLKEDQIK). 2 consecutive Hexokinase domains span residues 16 to 458 (EDQI…MVTA) and 464 to 905 (QAQR…LITA). ATP contacts are provided by residues R30 and 84–89 (DLGGSK). A hexokinase small subdomain 1 region spans residues 73–207 (DGSENGEFLS…DMDVDILALV (135 aa)). 84–91 (DLGGSKFR) lines the D-glucose 6-phosphate pocket. D-glucose is bound by residues S155, 172–173 (TK), and 208–209 (ND). The hexokinase large subdomain 1 stretch occupies residues 208–447 (NDTVGTMMTC…CDVRFLLSES (240 aa)). The D-glucose 6-phosphate site is built by D209 and T232. D-glucose is bound by residues N235, E260, and 291-294 (QLFE). Residue 413–415 (DGT) participates in D-glucose 6-phosphate binding. 425–426 (KR) serves as a coordination point for ATP. D-glucose 6-phosphate is bound by residues S449 and 532–536 (DLGGT). The segment at 521 to 654 (DGTEKGKFLA…EFDLDIVAVV (134 aa)) is hexokinase small subdomain 2. An ATP-binding site is contributed by 532–537 (DLGGTN). Residues 602-603 (SF), 619-620 (TK), and 655-656 (ND) each bind D-glucose. The segment at 655 to 894 (NDTVGTMMTC…CDVTFMLSED (240 aa)) is hexokinase large subdomain 2. Residues D656 and T679 each coordinate D-glucose 6-phosphate. ATP is bound at residue T679. D-glucose is bound by residues 681–682 (SN), E707, and E741. ATP-binding positions include 746–747 (GM), 783–787 (TKFLS), and 862–866 (TLYKL). Residues 860–862 (DGT) and S896 each bind D-glucose 6-phosphate.

It belongs to the hexokinase family. Widely expressed. Highly expressed in the brush border, surface epithelium and the myenteric plexus of the small and large intestines; the acinar centrocytes and interlobular ducts of the pancreas; and the alveolar macrophages in the lungs (at protein level). Present at moderate level in the thyroid follicular epithelium (at protein level).

The protein localises to the cytoplasm. It is found in the mitochondrion membrane. The protein resides in the photoreceptor inner segment. The catalysed reaction is a D-hexose + ATP = a D-hexose 6-phosphate + ADP + H(+). It carries out the reaction D-glucose + ATP = D-glucose 6-phosphate + ADP + H(+). Its pathway is carbohydrate metabolism; hexose metabolism. It participates in carbohydrate degradation; glycolysis; D-glyceraldehyde 3-phosphate and glycerone phosphate from D-glucose: step 1/4. Functionally, catalyzes the phosphorylation of hexose to hexose 6-phosphate, although at very low level compared to other hexokinases. Has low glucose phosphorylating activity compared to other hexokinases. Involved in glucose homeostasis and hepatic lipid accumulation. Required to maintain whole-body glucose homeostasis during pregnancy; however additional evidences are required to confirm this role. The chain is Hexokinase HKDC1 from Homo sapiens (Human).